The sequence spans 1042 residues: SWI/SNF-related matrix-associated actin-dependent regulator of chromatin subfamily A member 1 (1042 aa).

A disordered region spans residues 25–82; that stretch reads EDEQPGPSTSQEEGAAAAATEATAATEKGEKKKEKNVSSFQLKLAAKAPKSEKEMDPE. The segment covering 36-50 has biased composition (low complexity); sequence EEGAAAAATEATAAT. Composition is skewed to basic and acidic residues over residues 51 to 60 and 73 to 82; these read EKGEKKKEKN and PKSEKEMDPE. Phosphoserine is present on residues serine 116 and serine 119. Positions 195–360 constitute a Helicase ATP-binding domain; it reads ISLYENGVNG…WALLNFLLPD (166 aa). 208-215 serves as a coordination point for ATP; it reads DEMGLGKT. A DEAH box motif is present at residues 311-314; the sequence is DEAH. One can recognise a Helicase C-terminal domain in the interval 490 to 641; it reads VLDKLLAKLK…SIVIQQGRLI (152 aa). Glycyl lysine isopeptide (Lys-Gly) (interchain with G-Cter in SUMO2) cross-links involve residues lysine 650, lysine 716, and lysine 738. Residues 819 to 849 are disordered; sequence EQKKIDGAEPLTPEETEEKEKLLTQGFTNWT. Basic and acidic residues predominate over residues 828–837; that stretch reads PLTPEETEEK. Residues 843-895 form the SANT 1 domain; it reads QGFTNWTKRDFNQFIKANEKYGRDDIDNIAREVEGKSPEEVMEYSAVFWERCN. Tyrosine 942 carries the post-translational modification Phosphotyrosine. One can recognise an SANT 2 domain in the interval 946–1010; the sequence is KGKNYTEEED…QRRCNTLISL (65 aa).

Belongs to the SNF2/RAD54 helicase family. ISWI subfamily. May form homodimers. Component of the ACF-1 ISWI chromatin remodeling complex at least composed of SMARCA1 and BAZ1A, which regulates the spacing of histone octamers on the DNA template to facilitate access to DNA. Within the complex interacts with BAZ1A; the interaction is direct. Component of the WICH-1 ISWI chromatin remodeling complex at least composed of SMARCA1 and BAZ1B/WSTF. Within the complex interacts with BAZ1B/WSTF. Component of the NoRC-1 ISWI chromatin remodeling complex at least composed of SMARCA1 and BAZ2A/TIP5. Within the complex interacts with BAZ2A/TIP5. Component of the BRF-1 ISWI chromatin remodeling complex at least composed of SMARCA1 and BAZ2B. Within the complex interacts with BAZ2B. Component of the NURF-1 ISWI chromatin remodeling complex (also called the nucleosome-remodeling factor (NURF) complex) at least composed of SMARCA1, BPTF, RBBP4 and RBBP7. Within the complex interacts with BPTF. Within the complex interacts with RBBP4 and RBBP7. Component of the CERF-1 ISWI chromatin remodeling complex (also called the CECR2-containing-remodeling factor (CERF) complex) at least composed of CECR2 and SMARCA1. LUZP1 is detected as part of the CERF-1 complex in embryonic stem cells where it is involved in complex stabilization but is not detected in the complex in the testis. Component of the RSF-1 ISWI chromatin remodeling complex at least composed of SMARCA1 and RSF1. Within the complex interacts with RSF1. Interacts with PRLR. Interacts with ERCC6. As to quaternary structure, may form homodimers. Component of the BPFT-SMARCA1 complex at least composed of SMARCA1, BPFT, RBBP4 and RBBP7; the complex is catalytically inactive and does not remodel chromatin. Within the complex interacts with BPTF, RBBP4 and RBBP7. Component of the BAZ1A-1-SMARCA1 complex at least composed of SMARCA1 and BAZ1A; the complex is catalytically inactive and does not remodel chromatin. Component of the BAZ1B-1-SMARCA1 complex at least composed of SMARCA1 and BAZ1B; the complex is catalytically inactive and does not remodel chromatin. Expressed in lung, breast, kidney, ovary, skeletal muscle and brain. As to expression, mainly expressed in non-neuronal tissues such as lung, breast, kidney, and ovary.

The protein resides in the nucleus. It localises to the chromosome. It catalyses the reaction ATP + H2O = ADP + phosphate + H(+). Functionally, ATPase that possesses intrinsic ATP-dependent chromatin-remodeling activity. ATPase activity is substrate-dependent, and is increased when nucleosomes are the substrate, but is also catalytically active when DNA alone is the substrate. Catalytic subunit of ISWI chromatin-remodeling complexes, which form ordered nucleosome arrays on chromatin and facilitate access to DNA during DNA-templated processes such as DNA replication, transcription, and repair. Within the ISWI chromatin-remodeling complexes, slides edge- and center-positioned histone octamers away from their original location on the DNA template. Catalytic activity and histone octamer sliding propensity is regulated and determined by components of the ISWI chromatin-remodeling complexes. The BAZ1A-, BAZ1B-, BAZ2A- and BAZ2B-containing ISWI chromatin-remodeling complexes regulate the spacing of nucleosomes along the chromatin and have the ability to slide mononucleosomes to the center of a DNA template. The CECR2- and RSF1-containing ISWI chromatin-remodeling complexes do not have the ability to slide mononucleosomes to the center of a DNA template. Within the NURF-1 and CERF-1 ISWI chromatin remodeling complexes, nucleosomes are the preferred substrate for its ATPase activity. Within the NURF-1 ISWI chromatin-remodeling complex, binds to the promoters of En1 and En2 to positively regulate their expression and promote brain development. May promote neurite outgrowth. May be involved in the development of luteal cells. Facilitates nucleosome assembly during DNA replication, ensuring replication fork progression and genomic stability by preventing replication stress and nascent DNA gaps. In terms of biological role, catalytically inactive when either DNA or nucleosomes are the substrate and does not possess chromatin-remodeling activity. Acts as a negative regulator of chromatin remodelers by generating inactive complexes. The chain is SWI/SNF-related matrix-associated actin-dependent regulator of chromatin subfamily A member 1 from Homo sapiens (Human).